The following is a 78-amino-acid chain: Large ribosomal subunit protein bL28 (78 aa).

It belongs to the bacterial ribosomal protein bL28 family.

The sequence is that of Large ribosomal subunit protein bL28 from Pectobacterium atrosepticum (strain SCRI 1043 / ATCC BAA-672) (Erwinia carotovora subsp. atroseptica).